A 1835-amino-acid chain; its full sequence is AT-rich interactive domain-containing protein 2 (1835 aa).

Alanine 2 is modified (N-acetylalanine). At serine 4 the chain carries Phosphoserine. Glycyl lysine isopeptide (Lys-Gly) (interchain with G-Cter in SUMO2) cross-links involve residues lysine 7, lysine 15, and lysine 119. In terms of domain architecture, ARID spans 13–105 (RRKGLAFLDE…YLEKYEKVHH (93 aa)). An LXXLL motif is present at residues 313–317 (LRFLL). Positions 524-603 (ACQWLNAHFE…IHVVGVKRRA (80 aa)) form a DNA-binding region, RFX-type winged-helix. Residue lysine 555 forms a Glycyl lysine isopeptide (Lys-Gly) (interchain with G-Cter in SUMO2) linkage. A phosphoserine mark is found at serine 631 and serine 635. Position 653 is a phosphothreonine (threonine 653). Serine 689 bears the Phosphoserine mark. At threonine 692 the chain carries Phosphothreonine. 5 disordered regions span residues 819-844 (QQLI…QSQD), 962-1057 (LTGQ…SGES), 1266-1287 (MENP…KENE), 1295-1314 (NGRK…KIQS), and 1321-1341 (LISN…KQNS). Low complexity-rich tracts occupy residues 823-843 (TTSP…SQSQ), 985-996 (PTAMSSSSTPQS), and 1025-1044 (QVQV…QPQQ). Serine 1300 is subject to Phosphoserine. Positions 1301 to 1314 (DSSLPPSNSGKIQS) are enriched in polar residues. Serine 1391 and serine 1496 each carry phosphoserine. 2 disordered regions span residues 1488–1522 (DSGS…AEDT) and 1572–1629 (SAVQ…RKPG). The span at 1491-1509 (SKVSHSPALSSDVRSTNGT) shows a compositional bias: polar residues. Residues 1513 to 1522 (KTVKRPAEDT) are compositionally biased toward basic and acidic residues. Over residues 1573–1592 (AVQQKQQHPPTYVQNVVPQN) the composition is skewed to polar residues. Residues 1602-1623 (QVQGQPNSSQPSPFSGSSQPGD) show a composition bias toward low complexity. The segment at 1632-1657 (FMCLWQSCKKWFQTPSQVFYHAATEH) adopts a C2H2-type zinc-finger fold. Residues lysine 1701, lysine 1716, and lysine 1731 each participate in a glycyl lysine isopeptide (Lys-Gly) (interchain with G-Cter in SUMO2) cross-link. The interval 1703 to 1728 (DEPGQAGSQKSSTKQPTVGGTSSTPR) is disordered. Positions 1708–1728 (AGSQKSSTKQPTVGGTSSTPR) are enriched in polar residues.

In terms of assembly, component of the SWI/SNF-B (PBAF) chromatin remodeling complex, at least composed of SMARCA4/BRG1, SMARCB1/BAF47/SNF5, ACTL6A/BAF53A or ACTL6B/BAF53B, SMARCE1/BAF57, SMARCD1/BAF60A, SMARCD2/BAF60B, perhaps SMARCD3/BAF60C, SMARCC1/BAF155, SMARCC2/BAF170, PBRM1/BAF180, ARID2/BAF200 and actin. Interacts with SRF. Forms complexes with SRF and SRF cofactors MYOCD, NKX2-5 and SRFBP1. As to expression, highly expressed in heart.

The protein resides in the nucleus. Functionally, involved in transcriptional activation and repression of select genes by chromatin remodeling (alteration of DNA-nucleosome topology). Required for the stability of the SWI/SNF chromatin remodeling complex SWI/SNF-B (PBAF). May be involved in targeting the complex to different genes. May be involved in regulating transcriptional activation of cardiac genes. This is AT-rich interactive domain-containing protein 2 from Homo sapiens (Human).